A 199-amino-acid chain; its full sequence is 5'-deoxynucleotidase Ent638_2835 (199 aa).

Substrate is bound by residues 18-19 (RW) and histidine 33. In terms of domain architecture, HD spans 30–142 (VSEHSLQVAM…VKQADALCAY (113 aa)). Histidine 33, histidine 68, and aspartate 69 together coordinate a divalent metal cation. Residues aspartate 69, 77–80 (DLPT), and aspartate 137 each bind substrate. Position 137 (aspartate 137) interacts with a divalent metal cation.

The protein belongs to the 5DNU family. Homodimer. It depends on a divalent metal cation as a cofactor.

It localises to the cytoplasm. It carries out the reaction a 2'-deoxyribonucleoside 5'-phosphate + H2O = a 2'-deoxyribonucleoside + phosphate. In terms of biological role, catalyzes the strictly specific dephosphorylation of 2'-deoxyribonucleoside 5'-monophosphates. The protein is 5'-deoxynucleotidase Ent638_2835 of Enterobacter sp. (strain 638).